The following is a 234-amino-acid chain: Octanoyltransferase (234 aa).

Residues 35 to 221 (DGAPELVWFL…AFQQVFASPL (187 aa)) enclose the BPL/LPL catalytic domain. Substrate-binding positions include 74–81 (RGGQYTYH), 150–152 (AIG), and 163–165 (GIS). Cys181 functions as the Acyl-thioester intermediate in the catalytic mechanism.

It belongs to the LipB family.

The protein resides in the cytoplasm. The enzyme catalyses octanoyl-[ACP] + L-lysyl-[protein] = N(6)-octanoyl-L-lysyl-[protein] + holo-[ACP] + H(+). The protein operates within protein modification; protein lipoylation via endogenous pathway; protein N(6)-(lipoyl)lysine from octanoyl-[acyl-carrier-protein]: step 1/2. Functionally, catalyzes the transfer of endogenously produced octanoic acid from octanoyl-acyl-carrier-protein onto the lipoyl domains of lipoate-dependent enzymes. Lipoyl-ACP can also act as a substrate although octanoyl-ACP is likely to be the physiological substrate. The sequence is that of Octanoyltransferase from Hyphomonas neptunium (strain ATCC 15444).